The sequence spans 365 residues: MSSLEAIRYARGNLELLDQLALPLETKYIDVRDCNACWRCIKDMNVRGAPAIAIAAALALAVELEAKRGTLTTCEAAEAFVRERFDHMYTSRPTAVNLGEAKNRIQALAKRLSESGDVSGMIEGVIEGCEAMHAEDVASCRAIGDKGAAALLRACGAKDGENIKVMTCCNTGSLATAGYGTALGVIRALWESGRLERAYCLETRPYNQGSRLTAYELVYEKIPGTLICDNMAAALMARGDVDAIVVGADRVAANGDFANKIGTYSLAVNAKHHGVPMFTAAPVTTLDPETATGADIHIEERPGEEVTHSLGKRVAAEGIDVWNPSFDVTPAALLTGVITEHGVIEKNASGLFPVADFVAQAKGGT.

The active-site Proton donor is Asp249.

It belongs to the eIF-2B alpha/beta/delta subunits family. MtnA subfamily.

It is found in the cytoplasm. Its subcellular location is the nucleus. It carries out the reaction 5-(methylsulfanyl)-alpha-D-ribose 1-phosphate = 5-(methylsulfanyl)-D-ribulose 1-phosphate. It functions in the pathway amino-acid biosynthesis; L-methionine biosynthesis via salvage pathway; L-methionine from S-methyl-5-thio-alpha-D-ribose 1-phosphate: step 1/6. Functionally, catalyzes the interconversion of methylthioribose-1-phosphate (MTR-1-P) into methylthioribulose-1-phosphate (MTRu-1-P). This is Methylthioribose-1-phosphate isomerase from Ostreococcus lucimarinus (strain CCE9901).